We begin with the raw amino-acid sequence, 146 residues long: Large ribosomal subunit protein uL15 (146 aa).

Positions 1–13 (MKLHELKAAEGSR) are enriched in basic and acidic residues. The disordered stretch occupies residues 1-56 (MKLHELKAAEGSRRVRNRVGRGAATGNGKTSGRGQKGQKARSGGKLRPGFEGGQLP). The segment covering 23–35 (AATGNGKTSGRGQ) has biased composition (gly residues).

This sequence belongs to the universal ribosomal protein uL15 family. Part of the 50S ribosomal subunit.

Functionally, binds to the 23S rRNA. The protein is Large ribosomal subunit protein uL15 of Staphylococcus epidermidis (strain ATCC 35984 / DSM 28319 / BCRC 17069 / CCUG 31568 / BM 3577 / RP62A).